We begin with the raw amino-acid sequence, 365 residues long: Mannonate dehydratase 1 (365 aa).

This sequence belongs to the mannonate dehydratase family. Fe(2+) is required as a cofactor. The cofactor is Mn(2+).

The enzyme catalyses D-mannonate = 2-dehydro-3-deoxy-D-gluconate + H2O. It functions in the pathway carbohydrate metabolism; pentose and glucuronate interconversion. In terms of biological role, catalyzes the dehydration of D-mannonate. In Bacillus licheniformis (strain ATCC 14580 / DSM 13 / JCM 2505 / CCUG 7422 / NBRC 12200 / NCIMB 9375 / NCTC 10341 / NRRL NRS-1264 / Gibson 46), this protein is Mannonate dehydratase 1.